The sequence spans 22 residues: Brain peptide MVPVPVHHMADELLRNGPDTVI (22 aa).

The chain is Brain peptide MVPVPVHHMADELLRNGPDTVI from Apis mellifera (Honeybee).